The following is a 216-amino-acid chain: Imidazoleglycerol-phosphate dehydratase (216 aa).

The protein belongs to the imidazoleglycerol-phosphate dehydratase family.

It is found in the cytoplasm. It carries out the reaction D-erythro-1-(imidazol-4-yl)glycerol 3-phosphate = 3-(imidazol-4-yl)-2-oxopropyl phosphate + H2O. It participates in amino-acid biosynthesis; L-histidine biosynthesis; L-histidine from 5-phospho-alpha-D-ribose 1-diphosphate: step 6/9. This Nocardia farcinica (strain IFM 10152) protein is Imidazoleglycerol-phosphate dehydratase.